A 157-amino-acid chain; its full sequence is Protein Smg homolog (157 aa).

The protein belongs to the Smg family.

This chain is Protein Smg homolog, found in Colwellia psychrerythraea (strain 34H / ATCC BAA-681) (Vibrio psychroerythus).